The primary structure comprises 1456 residues: Ig-like and fibronectin type-III domain-containing protein C27B7.7 (1456 aa).

The first 16 residues, Met-1–Cys-16, serve as a signal peptide directing secretion. Fibronectin type-III domains are found at residues Asn-24–Thr-128 and Ile-132–Thr-227. N-linked (GlcNAc...) asparagine glycosylation is found at Asn-64, Asn-146, Asn-164, Asn-198, and Asn-225. Positions Pro-236–Asn-322 constitute an Ig-like 1 domain. Cysteines 254 and 308 form a disulfide. Residues Pro-328–Ile-426 enclose the Fibronectin type-III 3 domain. 3 N-linked (GlcNAc...) asparagine glycosylation sites follow: Asn-471, Asn-497, and Asn-517. Fibronectin type-III domains are found at residues Ala-531–Gly-631, Pro-636–Ser-736, and Glu-737–Thr-846. N-linked (GlcNAc...) asparagine glycosylation is found at Asn-658, Asn-691, and Asn-692. The Ig-like 2 domain occupies Pro-841 to Arg-948. Cys-877 and Cys-932 are joined by a disulfide. N-linked (GlcNAc...) asparagine glycosylation is found at Asn-893, Asn-898, Asn-969, Asn-1091, Asn-1120, Asn-1133, Asn-1151, Asn-1207, Asn-1268, Asn-1277, Asn-1298, Asn-1350, Asn-1357, and Asn-1382. The Fibronectin type-III 7 domain maps to Pro-955 to Thr-1050. Fibronectin type-III domains are found at residues Ala-1148–Gly-1234, Pro-1236–Asp-1343, and Val-1347–Ser-1438. Residues Leu-1419–Leu-1456 are disordered. Low complexity predominate over residues Ile-1434–Gly-1445.

It is found in the secreted. The sequence is that of Ig-like and fibronectin type-III domain-containing protein C27B7.7 from Caenorhabditis elegans.